We begin with the raw amino-acid sequence, 89 residues long: Small ribosomal subunit protein uS15 (89 aa).

Belongs to the universal ribosomal protein uS15 family. As to quaternary structure, part of the 30S ribosomal subunit. Forms a bridge to the 50S subunit in the 70S ribosome, contacting the 23S rRNA.

Functionally, one of the primary rRNA binding proteins, it binds directly to 16S rRNA where it helps nucleate assembly of the platform of the 30S subunit by binding and bridging several RNA helices of the 16S rRNA. Forms an intersubunit bridge (bridge B4) with the 23S rRNA of the 50S subunit in the ribosome. The chain is Small ribosomal subunit protein uS15 from Pelodictyon phaeoclathratiforme (strain DSM 5477 / BU-1).